The primary structure comprises 224 residues: Toxin coregulated pilin (224 aa).

Positions 1-25 are cleaved as a propeptide — atypical leader sequence; it reads MQLLKQLFKKKFVKEEHDKKTGQEG. At Met26 the chain carries N-methylmethionine. A helical membrane pass occupies residues 26-46; sequence MTLLEVIIVLGIMGVVSAGVV. Cys145 and Cys211 form a disulfide bridge.

Its subcellular location is the fimbrium. It localises to the membrane. Functionally, major component of the toxin co-regulated pilus (tcp) which is a type IV pilus essential for bacterial aggregation and subsequent colonization in the host small intestine. The sequence is that of Toxin coregulated pilin (tcpA) from Vibrio cholerae.